Consider the following 91-residue polypeptide: ATP synthase subunit c (91 aa).

2 helical membrane-spanning segments follow: residues F4–I24 and I53–L73.

It belongs to the ATPase C chain family. In terms of assembly, F-type ATPases have 2 components, F(1) - the catalytic core - and F(0) - the membrane proton channel. F(1) has five subunits: alpha(3), beta(3), gamma(1), delta(1), epsilon(1). F(0) has three main subunits: a(1), b(2) and c(10-14). The alpha and beta chains form an alternating ring which encloses part of the gamma chain. F(1) is attached to F(0) by a central stalk formed by the gamma and epsilon chains, while a peripheral stalk is formed by the delta and b chains.

It localises to the cell inner membrane. F(1)F(0) ATP synthase produces ATP from ADP in the presence of a proton or sodium gradient. F-type ATPases consist of two structural domains, F(1) containing the extramembraneous catalytic core and F(0) containing the membrane proton channel, linked together by a central stalk and a peripheral stalk. During catalysis, ATP synthesis in the catalytic domain of F(1) is coupled via a rotary mechanism of the central stalk subunits to proton translocation. Its function is as follows. Key component of the F(0) channel; it plays a direct role in translocation across the membrane. A homomeric c-ring of between 10-14 subunits forms the central stalk rotor element with the F(1) delta and epsilon subunits. This Trichlorobacter lovleyi (strain ATCC BAA-1151 / DSM 17278 / SZ) (Geobacter lovleyi) protein is ATP synthase subunit c.